Here is a 106-residue protein sequence, read N- to C-terminus: uncharacterized protein (106 aa).

This is an uncharacterized protein from Sinorhizobium fredii (strain NBRC 101917 / NGR234).